Consider the following 471-residue polypeptide: Ribulose bisphosphate carboxylase large chain (471 aa).

Position 5 is an N6,N6,N6-trimethyllysine (Lys5). The substrate site is built by Asn114 and Thr164. Lys166 functions as the Proton acceptor in the catalytic mechanism. Lys168 is a substrate binding site. Positions 192, 194, and 195 each coordinate Mg(2+). Position 192 is an N6-carboxylysine (Lys192). Catalysis depends on His285, which acts as the Proton acceptor. Positions 286, 318, and 370 each coordinate substrate.

Belongs to the RuBisCO large chain family. Type I subfamily. Heterohexadecamer of 8 large chains and 8 small chains; disulfide-linked. The disulfide link is formed within the large subunit homodimers. Mg(2+) serves as cofactor. The disulfide bond which can form in the large chain dimeric partners within the hexadecamer appears to be associated with oxidative stress and protein turnover.

The protein localises to the plastid. It is found in the chloroplast. The enzyme catalyses 2 (2R)-3-phosphoglycerate + 2 H(+) = D-ribulose 1,5-bisphosphate + CO2 + H2O. The catalysed reaction is D-ribulose 1,5-bisphosphate + O2 = 2-phosphoglycolate + (2R)-3-phosphoglycerate + 2 H(+). RuBisCO catalyzes two reactions: the carboxylation of D-ribulose 1,5-bisphosphate, the primary event in carbon dioxide fixation, as well as the oxidative fragmentation of the pentose substrate in the photorespiration process. Both reactions occur simultaneously and in competition at the same active site. The chain is Ribulose bisphosphate carboxylase large chain from Anthocleista grandiflora (Forest fever tree).